Here is a 225-residue protein sequence, read N- to C-terminus: Late embryogenesis abundant protein 29 (225 aa).

Disordered regions lie at residues 1 to 167 (MASN…GGFL) and 193 to 225 (TEEEDKEHYPGSTTTTTATTRTTDPTHQTYQRK). 4 stretches are compositionally biased toward basic and acidic residues: residues 28-39 (MRDKAEEGRDKT), 49-61 (KAHETAQSAKDKT), 71-83 (KAHETAQSAKEKT), and 93-119 (KAHETTQAAKEKTSQAGDKAREAKDKA). LEA 11-mer repeat repeat units lie at residues 53–63 (TAQSAKDKTSQ), 75–85 (TAQSAKEKTSQ), and 97–107 (TTQAAKEKTSQ). The segment covering 141 to 153 (TKETAQGAAQYTK) has biased composition (polar residues). The segment covering 154–163 (ETAEAGRDKT) has biased composition (basic and acidic residues). The span at 205 to 225 (TTTTTATTRTTDPTHQTYQRK) shows a compositional bias: low complexity.

Belongs to the LEA type 4 family.

Its subcellular location is the cytoplasm. It is found in the cytosol. Functionally, involved dehydration tolerance. The polypeptide is Late embryogenesis abundant protein 29 (Arabidopsis thaliana (Mouse-ear cress)).